Here is a 524-residue protein sequence, read N- to C-terminus: MTTTPKSEQDRVIIFDTTLRDGEQCPGATMTFEEKLNVAAMLDEMGVDVIEAGYPFASDGDFEAVHEIAKRSKNSVICGLSRAAHKDIDRCAEAIKPAERGRIHTFLSTSPVHMKYKLQMEAAQVYEMVISSVTRARNHTDDVEWSAEDATRTEFDFLCRCIEAAIKAGATTINLPDTVGYAVPEEYREMFRKVRETVPNADKARFSVHCHDDLGMAVANSIAGVQGGARQIECTINGIGERAGNAALEEVVMAMRVRQDKVPYWNRIESKMLTHASKTVSAATSFPVQYNKAIVGRNAFAHESGIHQDGMIKNAQTYEIMTPETVGVKGTSLVMGKHSGRAGLIHKMEELGYKLSRNQIEDVFVRFKALADRKKDVYDEDIEALVDEQLLHGQDLIRLKSLTVIAGTHGPQRATMKIDVDGQLRIEEAEGNGPVDAVFNCIKALVPHDAKLELYQVHAVTEGTDAQAEVSVRLSHEGRSMTARAADPDTLVASAKAYLGALNKIVAKRQRDVRQDAPAVAVAG.

A Pyruvate carboxyltransferase domain is found at 12-274 (VIIFDTTLRD…WNRIESKMLT (263 aa)). Mn(2+) contacts are provided by D21, H209, H211, and N245. The regulatory domain stretch occupies residues 398–524 (RLKSLTVIAG…QDAPAVAVAG (127 aa)).

It belongs to the alpha-IPM synthase/homocitrate synthase family. LeuA type 1 subfamily. As to quaternary structure, homodimer. Requires Mn(2+) as cofactor.

The protein localises to the cytoplasm. It catalyses the reaction 3-methyl-2-oxobutanoate + acetyl-CoA + H2O = (2S)-2-isopropylmalate + CoA + H(+). The protein operates within amino-acid biosynthesis; L-leucine biosynthesis; L-leucine from 3-methyl-2-oxobutanoate: step 1/4. Its function is as follows. Catalyzes the condensation of the acetyl group of acetyl-CoA with 3-methyl-2-oxobutanoate (2-ketoisovalerate) to form 3-carboxy-3-hydroxy-4-methylpentanoate (2-isopropylmalate). The polypeptide is 2-isopropylmalate synthase (Rhodopseudomonas palustris (strain BisB5)).